Here is a 248-residue protein sequence, read N- to C-terminus: Allergin-1 (248 aa).

Residues 1 to 33 (MGDDDTPVCLSVASCKGVSCWLDKLLLWALTLS) form the signal peptide. Over 34 to 150 (ITLRNTAVDC…DESCSSCLLS (117 aa)) the chain is Extracellular. The Ig-like C2-type domain occupies 54–137 (PNLNSSMSVV…SKYSQNFNFT (84 aa)). Residue N68 is glycosylated (N-linked (GlcNAc...) asparagine). The cysteines at positions 73 and 120 are disulfide-linked. N135 is a glycosylation site (N-linked (GlcNAc...) asparagine). A helical transmembrane segment spans residues 151 to 171 (LLLPGVLLGLILPGLAFLIYL). Residues 172-248 (KYKKGCTGKT…DDYIYSELTY (77 aa)) are Cytoplasmic-facing. Short sequence motifs (ITIM motif) lie at residues 216 to 221 (IHYTTP) and 241 to 246 (YIYSEL). Y218 and Y243 each carry phosphotyrosine.

In terms of assembly, monomer. Interacts (tyrosine-phosphorylated) with PTPN6, PTPN11 and INPP5D. In terms of processing, N-glycosylated. In terms of tissue distribution, mast cell-specific. Expressed in primary and transformed mast cells.

The protein resides in the cell membrane. Functionally, immunoglobulin-like receptor which plays an inhibitory role in degranulation of mast cells. Negatively regulates IgE-mediated mast cell activation and suppresses the type I immediate hypersensitivity reaction. The protein is Allergin-1 (Milr1) of Rattus norvegicus (Rat).